A 205-amino-acid polypeptide reads, in one-letter code: Octanoyltransferase (205 aa).

A BPL/LPL catalytic domain is found at 29-204; the sequence is AETPDEIWIV…HLLQQLDQKN (176 aa). Substrate-binding positions include 68–75, 135–137, and 148–150; these read RGGQVTYH, ALG, and GVS. The Acyl-thioester intermediate role is filled by Cys166.

This sequence belongs to the LipB family.

The protein localises to the cytoplasm. It catalyses the reaction octanoyl-[ACP] + L-lysyl-[protein] = N(6)-octanoyl-L-lysyl-[protein] + holo-[ACP] + H(+). Its pathway is protein modification; protein lipoylation via endogenous pathway; protein N(6)-(lipoyl)lysine from octanoyl-[acyl-carrier-protein]: step 1/2. Its function is as follows. Catalyzes the transfer of endogenously produced octanoic acid from octanoyl-acyl-carrier-protein onto the lipoyl domains of lipoate-dependent enzymes. Lipoyl-ACP can also act as a substrate although octanoyl-ACP is likely to be the physiological substrate. This chain is Octanoyltransferase, found in Dechloromonas aromatica (strain RCB).